The chain runs to 325 residues: 5-dehydro-2-deoxygluconokinase (325 aa).

Belongs to the carbohydrate kinase PfkB family.

The catalysed reaction is 5-dehydro-2-deoxy-D-gluconate + ATP = 6-phospho-5-dehydro-2-deoxy-D-gluconate + ADP + H(+). The protein operates within polyol metabolism; myo-inositol degradation into acetyl-CoA; acetyl-CoA from myo-inositol: step 5/7. Catalyzes the phosphorylation of 5-dehydro-2-deoxy-D-gluconate (2-deoxy-5-keto-D-gluconate or DKG) to 6-phospho-5-dehydro-2-deoxy-D-gluconate (DKGP). In Listeria monocytogenes serotype 4b (strain CLIP80459), this protein is 5-dehydro-2-deoxygluconokinase.